The following is a 710-amino-acid chain: Solute carrier family 15 member 1 (710 aa).

Residues 1–21 (MGMSKSRGCFGYPLSIFFIVV) traverse the membrane as a helical segment. The Extracellular portion of the chain corresponds to 22 to 53 (NEFCERFSYYGMRALLVLYFRNFLGWDDDLST). Residues 54 to 74 (AIYHTFVALCYLTPILGALIA) form a helical membrane-spanning segment. At 75–82 (DSWLGKFK) the chain is on the cytoplasmic side. The chain crosses the membrane as a helical span at residues 83-103 (TIVSLSIVYTIGQAVISVSSI). Residues 104-118 (NDLTDHDHDGSPNNL) lie on the Extracellular side of the membrane. Residues 119 to 139 (PLHVALSMIGLALIALGTGGI) form a helical membrane-spanning segment. Topologically, residues 140-161 (KPCVSAFGGDQFEEGQEKQRNR) are cytoplasmic. A helical membrane pass occupies residues 162–182 (FFSIFYLAINAGSLLSTIITP). The Extracellular segment spans residues 183–198 (ILRVQQCGIHSQQACY). A helical membrane pass occupies residues 199–219 (PLAFGVPAALMAVALIVFVLG). Over 220–276 (SGMYKKFQPQGNIMGKVAKCIRFAIKNRFRHRSKAFPKRNHWLDWAKEKYDERLISQ) the chain is Cytoplasmic. A helical transmembrane segment spans residues 277–297 (IKIMTKVMFLYIPLPMFWALF). Residues 298-327 (DQQGSRWTLQATTMTGKIGTIEIQPDQMQT) lie on the Extracellular side of the membrane. Residues 328–348 (VNAILIVIMVPIVDAVVYPLI) form a helical membrane-spanning segment. The Cytoplasmic portion of the chain corresponds to 349–361 (AKCGFNFTSLKKM). The helical transmembrane segment at 362–382 (TVGMFLASMAFVVAAIVQVEI) threads the bilayer. Residues 383–586 (DKTLPVFPSG…PPNTVNMALQ (204 aa)) lie on the Extracellular side of the membrane. The segment at 383-586 (DKTLPVFPSG…PPNTVNMALQ (204 aa)) is extracellular domain (ECD). N-linked (GlcNAc...) asparagine glycosylation is found at asparagine 415, asparagine 439, asparagine 510, asparagine 532, and asparagine 539. The helical transmembrane segment at 587 to 607 (IPQYFLLTCGEVVFSVTGLEF) threads the bilayer. Over 608 to 621 (SYSQAPSNMKSVLQ) the chain is Cytoplasmic. A helical membrane pass occupies residues 622-642 (AGWLLTVAIGNIIVLIVAEAG). Topologically, residues 643-647 (HFDKQ) are extracellular. The chain crosses the membrane as a helical span at residues 648-668 (WAEYVLFASLLLVVCIIFAIM). The Cytoplasmic segment spans residues 669 to 710 (ARFYTYINPAEIEAQFDEDEKKKGVGKENPYSSLEPVSQTNM). The interval 687 to 710 (DEKKKGVGKENPYSSLEPVSQTNM) is disordered. Polar residues predominate over residues 698-710 (PYSSLEPVSQTNM).

This sequence belongs to the major facilitator superfamily. Proton-dependent oligopeptide transporter (POT/PTR) (TC 2.A.17) family. Interacts (via extracellular domain region) with trypsin. As to expression, highly expressed in small intestine. In terms of tissue distribution, expression is restricted to pinealocytes.

The protein resides in the apical cell membrane. It carries out the reaction a dipeptide(out) + H(+)(out) = a dipeptide(in) + H(+)(in). The enzyme catalyses an L-amino acid tripeptide(out) + H(+)(out) = an L-amino acid tripeptide(in) + H(+)(in). It catalyses the reaction L-alanyl-L-lysine(out) + H(+)(out) = L-alanyl-L-lysine(in) + H(+)(in). The catalysed reaction is L-alanyl-L-proline(out) + H(+)(out) = L-alanyl-L-proline(in) + H(+)(in). It carries out the reaction L-alanyl-L-valine(out) + H(+)(out) = L-alanyl-L-valine(in) + H(+)(in). The enzyme catalyses carnosine(out) + H(+)(out) = carnosine(in) + H(+)(in). It catalyses the reaction glycyl-L-glutamine(out) + H(+)(out) = glycyl-L-glutamine(in) + H(+)(in). The catalysed reaction is glycyl-L-leucine(out) + H(+)(out) = glycyl-L-leucine(in) + H(+)(in). It carries out the reaction glycyl-L-proline(out) + H(+)(out) = glycyl-L-proline(in) + H(+)(in). The enzyme catalyses glycyl-sarcosine(out) + H(+)(out) = glycyl-sarcosine(in) + H(+)(in). It catalyses the reaction L-leucyl-L-leucine(out) + H(+)(out) = L-leucyl-L-leucine(in) + H(+)(in). The catalysed reaction is L-leucyl-L-proline(out) + H(+)(out) = L-leucyl-L-proline(in) + H(+)(in). It carries out the reaction L-phenylalanyl-L-leucine(out) + H(+)(out) = L-phenylalanyl-L-leucine(in) + H(+)(in). The enzyme catalyses L-phenylalanyl-L-phenylalanine(out) + H(+)(out) = L-phenylalanyl-L-phenylalanine(in) + H(+)(in). It catalyses the reaction L-lysyl-glycine(out) + H(+)(out) = L-lysyl-glycine(in) + H(+)(in). The catalysed reaction is L-tyrosylglycine(out) + H(+)(out) = L-tyrosylglycine(in) + H(+)(in). It carries out the reaction L-alanyl-L-aspartate(out) + 2 H(+)(out) = L-alanyl-L-aspartate(in) + 2 H(+)(in). The enzyme catalyses L-aspartyl-glycine(out) + 2 H(+)(out) = L-aspartyl-glycine(in) + 2 H(+)(in). It catalyses the reaction glycyl-L-aspartate(out) + 2 H(+)(out) = glycyl-L-aspartate(in) + 2 H(+)(in). The catalysed reaction is glycyl-L-glutamate(out) + 2 H(+)(out) = glycyl-L-glutamate(in) + 2 H(+)(in). It carries out the reaction L-alanyl-L-leucyl-L-alanine(out) + H(+)(out) = L-alanyl-L-leucyl-L-alanine(in) + H(+)(in). The enzyme catalyses L-alanyl-L-prolylglycine(out) + H(+)(out) = L-alanyl-L-prolylglycine(in) + H(+)(in). It catalyses the reaction glycylglycyl-L-isoleucine(out) + H(+)(out) = glycylglycyl-L-isoleucine(in) + H(+)(in). The catalysed reaction is glycylglycyl-L-proline(out) + H(+)(out) = glycylglycyl-L-proline(in) + H(+)(in). It carries out the reaction L-methionyl-L-phenylalanyl-L-methionine(out) + H(+)(out) = L-methionyl-L-phenylalanyl-L-methionine(in) + H(+)(in). The enzyme catalyses N-acetyl-D-muramoyl-L-alanyl-D-isoglutamine(out) + 2 H(+)(out) = N-acetyl-D-muramoyl-L-alanyl-D-isoglutamine(in) + 2 H(+)(in). It catalyses the reaction N(alpha)-formyl-L-methionyl-L-leucyl-L-phenylalanine(out) + 2 H(+)(out) = N(alpha)-formyl-L-methionyl-L-leucyl-L-phenylalanine(in) + 2 H(+)(in). In terms of biological role, electrogenic proton-coupled amino-acid transporter that transports oligopeptides of 2 to 4 amino acids with a preference for dipeptides. Transports neutral and monovalently charged peptides with a proton to peptide stoichiometry of 1:1 or 2:1. Primarily responsible for the absorption of dietary di- and tripeptides from the small intestinal lumen. Mediates transepithelial transport of muramyl and N-formylated bacterial dipeptides contributing to recognition of pathogenic bacteria by the mucosal immune system. The chain is Solute carrier family 15 member 1 (Slc15a1) from Rattus norvegicus (Rat).